Consider the following 452-residue polypeptide: GTPase Obg (452 aa).

The Obg domain maps to 1–158 (MFIDRAKIYV…KWIVLELKVM (158 aa)). 2 disordered regions span residues 66-87 (GKRG…DKVI) and 117-143 (AEGG…SEDG). The OBG-type G domain occupies 159-338 (AEVGLIGYPN…LLDFVAEKVA (180 aa)). Residues 165-172 (GYPNVGKS), 190-194 (FTTLN), 212-215 (DIPG), 282-285 (NKMD), and 319-321 (SAA) each bind GTP. Mg(2+) contacts are provided by serine 172 and threonine 192. One can recognise an OCT domain in the interval 376–452 (IEEKPKSDFG…KIGNVEFEYQ (77 aa)).

It belongs to the TRAFAC class OBG-HflX-like GTPase superfamily. OBG GTPase family. As to quaternary structure, monomer. The cofactor is Mg(2+).

The protein resides in the cytoplasm. Functionally, an essential GTPase which binds GTP, GDP and possibly (p)ppGpp with moderate affinity, with high nucleotide exchange rates and a fairly low GTP hydrolysis rate. Plays a role in control of the cell cycle, stress response, ribosome biogenesis and in those bacteria that undergo differentiation, in morphogenesis control. The protein is GTPase Obg of Natranaerobius thermophilus (strain ATCC BAA-1301 / DSM 18059 / JW/NM-WN-LF).